A 366-amino-acid chain; its full sequence is IgG receptor FcRn large subunit p51 (366 aa).

The N-terminal stretch at 1-22 (MGMSQPGVLLSLLLVLLPQTWG) is a signal peptide. The alpha-1 stretch occupies residues 23 to 111 (AEPRLPLMYH…RTLENQINGT (89 aa)). The Extracellular segment spans residues 23 to 298 (AEPRLPLMYH…VDLDSPARSS (276 aa)). Residues Asn-109, Asn-126, Asn-150, and Asn-247 are each glycosylated (N-linked (GlcNAc...) asparagine). Positions 112-201 (FTLQGLLGCE…ERGRQNLEWK (90 aa)) are alpha-2. Intrachain disulfides connect Cys-120–Cys-183 and Cys-222–Cys-276. An alpha-3 region spans residues 202–291 (EPPSMRLKAR…GLAQPLTVDL (90 aa)). An Ig-like C1-type domain is found at 203–290 (PPSMRLKARP…EGLAQPLTVD (88 aa)). A connecting peptide region spans residues 293–298 (SPARSS). A helical membrane pass occupies residues 299-322 (VPVVGIILGLLLVVVAIAGGVLLW). Topologically, residues 323 to 366 (NRMRSGLPAPWLSLSGDDSGDLLPGGNLPPEAEPQGVNAFPATS) are cytoplasmic. The residue at position 335 (Ser-335) is a Phosphoserine. The segment at 344–366 (LLPGGNLPPEAEPQGVNAFPATS) is disordered.

It belongs to the immunoglobulin superfamily. FcRn complex consists of two subunits: p51, and p14 which is equivalent to beta-2-microglobulin. It forms an MHC class I-like heterodimer. Interacts with albumin/ALB; this interaction regulates ALB homeostasis. Intestinal epithelium.

The protein localises to the cell membrane. Its subcellular location is the endosome membrane. Its function is as follows. Cell surface receptor that transfers passive humoral immunity from the mother to the newborn. Binds to the Fc region of monomeric immunoglobulin gamma and mediates its selective uptake from milk. IgG in the milk is bound at the apical surface of the intestinal epithelium. The resultant FcRn-IgG complexes are transcytosed across the intestinal epithelium and IgG is released from FcRn into blood or tissue fluids. Throughout life, contributes to effective humoral immunity by recycling IgG and extending its half-life in the circulation. Mechanistically, monomeric IgG binding to FcRn in acidic endosomes of endothelial and hematopoietic cells recycles IgG to the cell surface where it is released into the circulation. In addition of IgG, regulates homeostasis of the other most abundant circulating protein albumin/ALB. The polypeptide is IgG receptor FcRn large subunit p51 (Fcgrt) (Rattus norvegicus (Rat)).